The following is a 235-amino-acid chain: (5-formylfuran-3-yl)methyl phosphate synthase (235 aa).

K27 acts as the Schiff-base intermediate with substrate in catalysis. The Proton acceptor role is filled by K85.

Belongs to the MfnB family.

The enzyme catalyses 2 D-glyceraldehyde 3-phosphate = 4-(hydroxymethyl)-2-furancarboxaldehyde phosphate + phosphate + 2 H2O. It functions in the pathway cofactor biosynthesis; methanofuran biosynthesis. Functionally, catalyzes the formation of 4-(hydroxymethyl)-2-furancarboxaldehyde phosphate (4-HFC-P) from two molecules of glyceraldehyde-3-P (GA-3-P). This chain is (5-formylfuran-3-yl)methyl phosphate synthase, found in Methanococcus aeolicus (strain ATCC BAA-1280 / DSM 17508 / OCM 812 / Nankai-3).